The sequence spans 223 residues: Deoxyribose-phosphate aldolase (223 aa).

Asp-89 serves as the catalytic Proton donor/acceptor. The Schiff-base intermediate with acetaldehyde role is filled by Lys-152. Lys-181 acts as the Proton donor/acceptor in catalysis.

Belongs to the DeoC/FbaB aldolase family. DeoC type 1 subfamily.

It localises to the cytoplasm. The catalysed reaction is 2-deoxy-D-ribose 5-phosphate = D-glyceraldehyde 3-phosphate + acetaldehyde. The protein operates within carbohydrate degradation; 2-deoxy-D-ribose 1-phosphate degradation; D-glyceraldehyde 3-phosphate and acetaldehyde from 2-deoxy-alpha-D-ribose 1-phosphate: step 2/2. Functionally, catalyzes a reversible aldol reaction between acetaldehyde and D-glyceraldehyde 3-phosphate to generate 2-deoxy-D-ribose 5-phosphate. The protein is Deoxyribose-phosphate aldolase of Listeria monocytogenes serotype 4a (strain HCC23).